We begin with the raw amino-acid sequence, 140 residues long: Probable glycine cleavage system H protein (140 aa).

The 93-residue stretch at 22–114 (RAIIGITSYA…YEEGWIVVLE (93 aa)) folds into the Lipoyl-binding domain. Lysine 63 carries the N6-lipoyllysine modification.

The protein belongs to the GcvH family. The glycine cleavage system is composed of four proteins: P, T, L and H. Requires (R)-lipoate as cofactor.

In terms of biological role, the glycine cleavage system catalyzes the degradation of glycine. The H protein shuttles the methylamine group of glycine from the P protein to the T protein. The protein is Probable glycine cleavage system H protein of Korarchaeum cryptofilum (strain OPF8).